The primary structure comprises 150 residues: Large ribosomal subunit protein bL9 (150 aa).

Belongs to the bacterial ribosomal protein bL9 family.

Functionally, binds to the 23S rRNA. The protein is Large ribosomal subunit protein bL9 of Polynucleobacter necessarius subsp. necessarius (strain STIR1).